Reading from the N-terminus, the 275-residue chain is Chlorobenzene dihydrodiol dehydrogenase (275 aa).

The active-site Proton acceptor is the Y155.

It belongs to the short-chain dehydrogenases/reductases (SDR) family.

It carries out the reaction (1R,2R)-3-chlorocyclohexa-3,5-diene-1,2-diol + NAD(+) = 3-chlorocatechol + NADH + H(+). It participates in aromatic compound metabolism. Its function is as follows. Can transform various dihydrodiols of chlorobenzenes and chlorotoluenes into the respective catechols. The polypeptide is Chlorobenzene dihydrodiol dehydrogenase (Cupriavidus sp. (strain PS12)).